We begin with the raw amino-acid sequence, 86 residues long: Small ribosomal subunit protein bS20 (86 aa).

This sequence belongs to the bacterial ribosomal protein bS20 family.

Binds directly to 16S ribosomal RNA. This is Small ribosomal subunit protein bS20 from Kocuria rhizophila (strain ATCC 9341 / DSM 348 / NBRC 103217 / DC2201).